Here is a 198-residue protein sequence, read N- to C-terminus: Dephospho-CoA kinase (198 aa).

The region spanning 4-198 is the DPCK domain; it reads FLGLTGGIAS…LSDLLQEIGR (195 aa). 12–17 is a binding site for ATP; that stretch reads ASGKST.

This sequence belongs to the CoaE family.

The protein resides in the cytoplasm. It catalyses the reaction 3'-dephospho-CoA + ATP = ADP + CoA + H(+). It participates in cofactor biosynthesis; coenzyme A biosynthesis; CoA from (R)-pantothenate: step 5/5. Functionally, catalyzes the phosphorylation of the 3'-hydroxyl group of dephosphocoenzyme A to form coenzyme A. This chain is Dephospho-CoA kinase, found in Lactobacillus johnsonii (strain CNCM I-12250 / La1 / NCC 533).